The following is a 387-amino-acid chain: MSVIKMTDLDLAGKRVFIRADLNVPVKDGKVTSDARIRASLPTIELALKQGAKVMVTSHLGRPTEGEYNEEFSLLPVVNYLKDKLSNPVRLVKDYLDGVEVAAGELVVLENVRFNKGEKKDDEALSKKYAALCDVFVMDAFGTAHRAQASTHGIGKFADVACAGPLLAAELDALGKALKEPARPMVAIVGGSKVSTKLTVLDSLSKIADQLIVGGGIANTFVAAQGHNVGKSLYEADLVDEAKRLLSTCDIPVPTDVRVATEFSETATATLKSVNDIKDDEQILDLGDVSAQKLADILKNAKTILWNGPVGVFEFPNFRKGTEIVANAIADSEGFSIAGGGDTLAAIDLFGIADKISYISTGGGAFLEFVEGKVLPAVAMLEERAKQ.

Residues aspartate 21–asparagine 23, arginine 36, histidine 59–arginine 62, arginine 113, and arginine 146 contribute to the substrate site. Residues lysine 197, glutamate 314, and glycine 340–threonine 343 contribute to the ATP site.

Belongs to the phosphoglycerate kinase family. As to quaternary structure, monomer.

The protein resides in the cytoplasm. It carries out the reaction (2R)-3-phosphoglycerate + ATP = (2R)-3-phospho-glyceroyl phosphate + ADP. It functions in the pathway carbohydrate degradation; glycolysis; pyruvate from D-glyceraldehyde 3-phosphate: step 2/5. The protein is Phosphoglycerate kinase of Klebsiella pneumoniae (strain 342).